Here is a 306-residue protein sequence, read N- to C-terminus: MELKDYYAIMGVKPTDDLKTIKTAYRRLARKYHPDVSKEPDAEARFKEVAEAWEVLSDEQRRAEYDQMWQHRNDPQFNHQFHHGDGQSFNAEDFDDIFSSIFGQHARQSRQRPAARGHDIEIEVAVFLEETLTEHKRTISYNLPVYNAFGMIEQEIPKTLNVKIPAGVGNGQRIRLKGQGTPGENGGPNGDLWLVIHIAPHPLFDIVGQDLEIVVPVSPWEAALGAKVTVPTLKESILLTIPPGSQAGQRLRVKGKGLVSKKQTGDLYAVLKIVMPPKPDENTAALWQQLADAQSSFDPRKDWGKA.

The 65-residue stretch at 5 to 69 (DYYAIMGVKP…QRRAEYDQMW (65 aa)) folds into the J domain.

Its subcellular location is the cytoplasm. It localises to the nucleoid. Functionally, DNA-binding protein that preferentially recognizes a curved DNA sequence. It is probably a functional analog of DnaJ; displays overlapping activities with DnaJ, but functions under different conditions, probably acting as a molecular chaperone in an adaptive response to environmental stresses other than heat shock. Lacks autonomous chaperone activity; binds native substrates and targets them for recognition by DnaK. Its activity is inhibited by the binding of CbpM. The chain is Curved DNA-binding protein from Shigella sonnei (strain Ss046).